A 104-amino-acid chain; its full sequence is ATP-dependent Clp protease adapter protein ClpS (104 aa).

The protein belongs to the ClpS family. Binds to the N-terminal domain of the chaperone ClpA.

In terms of biological role, involved in the modulation of the specificity of the ClpAP-mediated ATP-dependent protein degradation. This chain is ATP-dependent Clp protease adapter protein ClpS, found in Burkholderia ambifaria (strain MC40-6).